Consider the following 395-residue polypeptide: ATP phosphoribosyltransferase regulatory subunit (395 aa).

Belongs to the class-II aminoacyl-tRNA synthetase family. HisZ subfamily. Heteromultimer composed of HisG and HisZ subunits.

Its subcellular location is the cytoplasm. It functions in the pathway amino-acid biosynthesis; L-histidine biosynthesis; L-histidine from 5-phospho-alpha-D-ribose 1-diphosphate: step 1/9. Its function is as follows. Required for the first step of histidine biosynthesis. May allow the feedback regulation of ATP phosphoribosyltransferase activity by histidine. This is ATP phosphoribosyltransferase regulatory subunit from Pseudomonas syringae pv. syringae (strain B728a).